A 196-amino-acid chain; its full sequence is ATP-dependent Clp protease proteolytic subunit (196 aa).

Serine 98 (nucleophile) is an active-site residue. Residue histidine 123 is part of the active site.

This sequence belongs to the peptidase S14 family. Fourteen ClpP subunits assemble into 2 heptameric rings which stack back to back to give a disk-like structure with a central cavity, resembling the structure of eukaryotic proteasomes.

It localises to the cytoplasm. It carries out the reaction Hydrolysis of proteins to small peptides in the presence of ATP and magnesium. alpha-casein is the usual test substrate. In the absence of ATP, only oligopeptides shorter than five residues are hydrolyzed (such as succinyl-Leu-Tyr-|-NHMec, and Leu-Tyr-Leu-|-Tyr-Trp, in which cleavage of the -Tyr-|-Leu- and -Tyr-|-Trp bonds also occurs).. In terms of biological role, cleaves peptides in various proteins in a process that requires ATP hydrolysis. Has a chymotrypsin-like activity. Plays a major role in the degradation of misfolded proteins. The protein is ATP-dependent Clp protease proteolytic subunit of Limosilactobacillus fermentum (strain NBRC 3956 / LMG 18251) (Lactobacillus fermentum).